We begin with the raw amino-acid sequence, 159 residues long: Phosphopantetheine adenylyltransferase (159 aa).

Residue T9 coordinates substrate. Residues 9–10 and H17 contribute to the ATP site; that span reads TF. Positions 41, 73, and 87 each coordinate substrate. ATP-binding positions include 88-90, E98, and 123-129; these read GLR and YSFISST.

The protein belongs to the bacterial CoaD family. In terms of assembly, homohexamer. Mg(2+) serves as cofactor.

The protein resides in the cytoplasm. It catalyses the reaction (R)-4'-phosphopantetheine + ATP + H(+) = 3'-dephospho-CoA + diphosphate. Its pathway is cofactor biosynthesis; coenzyme A biosynthesis; CoA from (R)-pantothenate: step 4/5. Reversibly transfers an adenylyl group from ATP to 4'-phosphopantetheine, yielding dephospho-CoA (dPCoA) and pyrophosphate. The chain is Phosphopantetheine adenylyltransferase from Pseudomonas fluorescens (strain ATCC BAA-477 / NRRL B-23932 / Pf-5).